The following is a 137-amino-acid chain: MLVPKRVKHRREFRGKMRGEAKGGKEVSFGEYGLQATTSHWITNRQIEAARIAMTRYMKRGGKVWIKIFPHKSYTAKAIGVRMGSGKGAPEGWVAPVKRGKVMFEIAGVSEEVAREALRLASHKLPVKSKFVKREAE.

The protein belongs to the universal ribosomal protein uL16 family. As to quaternary structure, part of the 50S ribosomal subunit.

Its function is as follows. Binds 23S rRNA and is also seen to make contacts with the A and possibly P site tRNAs. The sequence is that of Large ribosomal subunit protein uL16 from Streptococcus thermophilus (strain ATCC BAA-491 / LMD-9).